The following is a 504-amino-acid chain: Maturase K (504 aa).

Belongs to the intron maturase 2 family. MatK subfamily.

Its subcellular location is the plastid. It is found in the chloroplast. Usually encoded in the trnK tRNA gene intron. Probably assists in splicing its own and other chloroplast group II introns. This is Maturase K from Vauquelinia californica (Arizona rosewood).